A 620-amino-acid chain; its full sequence is EF-hand calcium-binding domain-containing protein 7 (620 aa).

A disordered region spans residues 1-24 (MANHSSLPSQKYAASERQEYQKPQ). EF-hand domains follow at residues 98–133 (ATKN…KGEK) and 134–169 (MSQE…TCEQ). The interval 176–234 (ERMDSNSKAKRQQFGSYIEKSPERSSSPKSSHGNLKLFDSETSTRKENKSSRPSSARSY) is disordered. The span at 213–225 (FDSETSTRKENKS) shows a compositional bias: basic and acidic residues. An EF-hand 3 domain is found at 394-429 (EFKSALSDMFDIIDLDGNGLLSLAEYNFFEMRTSGE). Ca(2+) contacts are provided by D407, D409, N411, and E418.

Its subcellular location is the cell projection. It localises to the cilium membrane. In terms of biological role, plays a role in the ciliary Hedgehog (Hh) signaling. This Xenopus laevis (African clawed frog) protein is EF-hand calcium-binding domain-containing protein 7 (efcab7).